A 507-amino-acid polypeptide reads, in one-letter code: Probable cytosol aminopeptidase (507 aa).

Positions 271 and 276 each coordinate Mn(2+). The active site involves lysine 283. Mn(2+) contacts are provided by aspartate 294, aspartate 353, and glutamate 355. Arginine 357 is an active-site residue.

Belongs to the peptidase M17 family. Mn(2+) serves as cofactor.

It is found in the cytoplasm. The enzyme catalyses Release of an N-terminal amino acid, Xaa-|-Yaa-, in which Xaa is preferably Leu, but may be other amino acids including Pro although not Arg or Lys, and Yaa may be Pro. Amino acid amides and methyl esters are also readily hydrolyzed, but rates on arylamides are exceedingly low.. The catalysed reaction is Release of an N-terminal amino acid, preferentially leucine, but not glutamic or aspartic acids.. Functionally, presumably involved in the processing and regular turnover of intracellular proteins. Catalyzes the removal of unsubstituted N-terminal amino acids from various peptides. This Nitratidesulfovibrio vulgaris (strain ATCC 29579 / DSM 644 / CCUG 34227 / NCIMB 8303 / VKM B-1760 / Hildenborough) (Desulfovibrio vulgaris) protein is Probable cytosol aminopeptidase.